The sequence spans 357 residues: Histidinol-phosphate aminotransferase (357 aa).

N6-(pyridoxal phosphate)lysine is present on lysine 221.

This sequence belongs to the class-II pyridoxal-phosphate-dependent aminotransferase family. Histidinol-phosphate aminotransferase subfamily. Requires pyridoxal 5'-phosphate as cofactor.

The enzyme catalyses L-histidinol phosphate + 2-oxoglutarate = 3-(imidazol-4-yl)-2-oxopropyl phosphate + L-glutamate. The protein operates within amino-acid biosynthesis; L-histidine biosynthesis; L-histidine from 5-phospho-alpha-D-ribose 1-diphosphate: step 7/9. This Sulfurisphaera tokodaii (strain DSM 16993 / JCM 10545 / NBRC 100140 / 7) (Sulfolobus tokodaii) protein is Histidinol-phosphate aminotransferase (hisC).